Reading from the N-terminus, the 228-residue chain is Small ribosomal subunit protein uS3 (228 aa).

The KH type-2 domain maps to 39-107 (IRKELNEKLK…PVNINIEEIK (69 aa)).

Belongs to the universal ribosomal protein uS3 family. In terms of assembly, part of the 30S ribosomal subunit. Forms a tight complex with proteins S10 and S14.

In terms of biological role, binds the lower part of the 30S subunit head. Binds mRNA in the 70S ribosome, positioning it for translation. In Hydrogenovibrio crunogenus (strain DSM 25203 / XCL-2) (Thiomicrospira crunogena), this protein is Small ribosomal subunit protein uS3.